The primary structure comprises 2345 residues: MDEPSPLAKTLELNQHSRFIIGSVSEDNSEDEISNLVKLDLEEKEGSLSPASVSSDTLSDLGISGLQDGLAFHMRSSMSGLHLVKQGRDRKKIDSQRDFTVASPAEFVTRFGGNKVIEKVLIANNGIAAVKCMRSIRRWSYEMFRNERAIRFVVMVTPEDLKANAEYIKMADHYVPVPGGPNNNNYANVELILDIAKRIPVQAVWAGWGHASENPKLPELLLKNGIAFMGPPSQAMWALGDKIASSIVAQTAGIPTLPWSGSGLRVDWQENDFSKRILNVPQDLYEKGYVKDVDDGLKAAEEVGYPVMIKASEGGGGKGIRKVNNADDFPNLFRQVQAEVPGSPIFVMRLAKQSRHLEVQILADQYGNAISLFGRDCSVQRRHQKIIEEAPAAIATPAVFEHMEQCAVKLAKMVGYVSAGTVEYLYSQDGSFYFLELNPRLQVEHPCTEMVADVNLPAAQLQIAMGIPLFRIKDIRMMYGVSPWGDAPIDFENSAHVPCPRGHVIAARITSENPDEGFKPSSGTVQELNFRSNKNVWGYFSVAAAGGLHEFADSQFGHCFSWGENREEAISNMVVALKELSIRGDFRTTVEYLIKLLETESFQLNRIDTGWLDRLIAEKVQAERPDTMLGVVCGALHVADVSLRNSISNFLHSLERGQVLPAHTLLNTVDVELIYEGIKYVLKVTRQSPNSYVVIMNGSCVEVDVHRLSDGGLLLSYDGSSYTTYMKEEVDRYRITIGNKTCVFEKENDPSVMRSPSAGKLIQYIVEDGGHVFAGQCYAEIEVMKMVMTLTAVESGCIHYVKRPGAALDPGCVIAKMQLDNPSKVQQAELHTGSLPQIQSTALRGEKLHRVFHYVLDNLVNVMNGYCLPDPFFSSRVKDWVERLMKTLRDPSLPLLELQDIMTSVSGRIPLNVEKSIKKEMAQYASNITSVLCQFPSQQIANILDSHAATLNRKSEREVFFMNTQSIVQLVQRYRSGIRGHMKAVVMDLLRQYLRVETQFQNGHYDKCVFALREENKSDMNTVLNYIFSHAQVTKKNLLVTMLIDQLCGRDPTLTDELLNILTELTQLSKTTNAKVALRARQVLIASHLPSYELRHNQVESIFLSAIDMYGHQFCIENLQKLILSETSIFDVLPNFFYHSNQVVRMAALEVYVRRAYIAYELNSVQHRQLKDNTCVVEFQFMLPTSHPNRGNIPTLNRMSFASNLNHYGMTHVASVSDVLLDNAFTPPCQRMGGMVSFRTFEDFVRIFDEIMGCFCDSPPQSPTFPESGHTSLYDEDKVPRDEPIHILNVAIKTDGDIEDDRLAAMFREFTQQNKATLVEHGIRRLTFLVAQKDFRKQVNCEVDQRFHREFPKFFTFRARDKFEEDRIYRHLEPALAFQLELNRMRNFDLTAIPCANHKMHLYLGAAKVEVGTEVTDYRFFVRAIIRHSDLVTKEASFEYLQNEGERLLLEAMDELEVAFNNTNVRTDCNHIFLNFVPTVIMDPSKIEESVRSMVMRYGSRLWKLRVLQAELKINIRLTTTGKAIPIRLFLTNESGYYLDISLYKEVTDSRTAQIMFQAYGDKQGPLHGMLINTPYVTKDLLQSKRFQAQSLGTTYIYDIPEMFRQSLIKLWESMSTQAFLPSPPLPSDILTYTELVLDDQGQLVHMNRLPGGNEIGMVAWKMSLKSPEYPDGRDIIVIGNDITYRIGSFGPQEDLLFLRASELARAEGIPRIYVAANSGARIGLAEEIRHMFHVAWVDPEDPYKGYKYLYLTPQDYKRVSALNSVHCEHVEDEGESRYKITDIIGKEEGLGAENLRGSGMIAGESSLAYDEVITISLVTCRAIGIGAYLVRLGQRTIQVENSHLILTGAGALNKVLGREVYTSNNQLGGIQIMHNNGVTHSTVCDDFEGVFTVLHWLSYMPKSVHSSVPLLNSKDPIDRIIEFVPTKAPYDPRWMLAGRPHPTQKGQWLSGFFDYGSFSEIMQPWAQTVVVGRARLGGIPVGVVAVETRTVELSIPADPANLDSEAKIIQQAGQVWFPDSAFKTYQAIKDFNREGLPLMVFANWRGFSGGMKDMYDQVLKFGAYIVDGLRECSQPVMVYIPPQAELRGGSWVVIDPTINPRHMEMYADRESRGSVLEPEGTVEIKFRKKDLVKTMRRVDPVYIRLAERLGTPELSPTERKELESKLKEREEFLIPIYHQVAVQFADLHDTPGRMQEKGVINDILDWKTSRTFFYWRLRRLLLEDLVKKKIHNANPELTDGQIQAMLRRWFVEVEGTVKAYVWDNNKDLVEWLEKQLTEEDGVRSVIEENIKYISRDYVLKQIRSLVQANPEVAMDSIVHMTQHISPTQRAEVVRILSTMDSPST.

M1 bears the N-acetylmethionine mark. A phosphoserine mark is found at S5, S23, S25, S29, S34, S47, S49, and S52. At T57 the chain carries Phosphothreonine. Phosphoserine occurs at positions 77 and 79. S79 bears the Phosphoserine; by AMPK mark. Residues 116–617 (VIEKVLIANN…DTGWLDRLIA (502 aa)) form the Biotin carboxylation domain. One can recognise an ATP-grasp domain in the interval 274–465 (SKRILNVPQD…LPAAQLQIAM (192 aa)). 300–357 (AEEVGYPVMIKASEGGGGKGIRKVNNADDFPNLFRQVQAEVPGSPIFVMRLAKQSRHL) provides a ligand contact to ATP. Mg(2+) is bound by residues E423, E436, and N438. 3 residues coordinate Mn(2+): E423, E436, and N438. The active site involves R440. At T609 the chain carries Phosphothreonine. The Biotinyl-binding domain maps to 744–818 (FEKENDPSVM…DPGCVIAKMQ (75 aa)). K785 is modified (N6-biotinyllysine). A phosphoserine mark is found at S834, S1200, S1215, and S1217. The residue at position 1226 (T1226) is a Phosphothreonine. Phosphoserine occurs at positions 1258, 1262, and 1272. Residue K1333 is modified to N6-acetyllysine. Positions 1575 to 1913 (PYVTKDLLQS…SVHSSVPLLN (339 aa)) constitute a CoA carboxyltransferase N-terminal domain. The carboxyltransferase stretch occupies residues 1575–2233 (PYVTKDLLQS…EDLVKKKIHN (659 aa)). CoA is bound by residues R1822, K2126, and R2128. Residues 1917-2233 (PIDRIIEFVP…EDLVKKKIHN (317 aa)) form the CoA carboxyltransferase C-terminal domain. T2152 bears the Phosphothreonine mark.

In terms of assembly, monomer, homodimer, and homotetramer. Can form filamentous polymers. Interacts in its inactive phosphorylated form with the BRCT domains of BRCA1 which prevents ACACA dephosphorylation and inhibits lipid synthesis. Interacts with MID1IP1; interaction with MID1IP1 promotes oligomerization and increases its activity. It depends on Mg(2+) as a cofactor. Mn(2+) serves as cofactor. Biotin is required as a cofactor. In terms of processing, phosphorylation on Ser-1262 is required for interaction with BRCA1. Post-translationally, phosphorylation at Ser-79 by AMPK inactivates enzyme activity. The biotin cofactor is covalently attached to the central biotinyl-binding domain and is required for the catalytic activity.

It localises to the cytoplasm. The protein resides in the cytosol. The catalysed reaction is hydrogencarbonate + acetyl-CoA + ATP = malonyl-CoA + ADP + phosphate + H(+). It functions in the pathway lipid metabolism; malonyl-CoA biosynthesis; malonyl-CoA from acetyl-CoA: step 1/1. With respect to regulation, inhibited by phosphorylation. Citrate promotes oligomerization of the protein into filaments that correspond to the most active form of the carboxylase. Functionally, cytosolic enzyme that catalyzes the carboxylation of acetyl-CoA to malonyl-CoA, the first and rate-limiting step of de novo fatty acid biosynthesis. This is a 2 steps reaction starting with the ATP-dependent carboxylation of the biotin carried by the biotin carboxyl carrier (BCC) domain followed by the transfer of the carboxyl group from carboxylated biotin to acetyl-CoA. In Mus musculus (Mouse), this protein is Acetyl-CoA carboxylase 1.